A 499-amino-acid chain; its full sequence is Glycerol kinase (499 aa).

Residue T13 coordinates ADP. Residues T13, T14, and S15 each coordinate ATP. T13 contacts sn-glycerol 3-phosphate. R17 serves as a coordination point for ADP. Sn-glycerol 3-phosphate contacts are provided by R83, E84, Y135, and D244. 5 residues coordinate glycerol: R83, E84, Y135, D244, and Q245. ADP is bound by residues T266 and G309. 4 residues coordinate ATP: T266, G309, Q313, and G410. 2 residues coordinate ADP: G410 and N414.

The protein belongs to the FGGY kinase family.

It catalyses the reaction glycerol + ATP = sn-glycerol 3-phosphate + ADP + H(+). It functions in the pathway polyol metabolism; glycerol degradation via glycerol kinase pathway; sn-glycerol 3-phosphate from glycerol: step 1/1. With respect to regulation, inhibited by fructose 1,6-bisphosphate (FBP). In terms of biological role, key enzyme in the regulation of glycerol uptake and metabolism. Catalyzes the phosphorylation of glycerol to yield sn-glycerol 3-phosphate. This chain is Glycerol kinase, found in Paraburkholderia phytofirmans (strain DSM 17436 / LMG 22146 / PsJN) (Burkholderia phytofirmans).